Here is a 179-residue protein sequence, read N- to C-terminus: Ribosome maturation factor RimM (179 aa).

In terms of domain architecture, PRC barrel spans 100–176; it reads KEEFHLLELI…FVIINPPNGL (77 aa).

It belongs to the RimM family. Binds ribosomal protein uS19.

The protein localises to the cytoplasm. An accessory protein needed during the final step in the assembly of 30S ribosomal subunit, possibly for assembly of the head region. Essential for efficient processing of 16S rRNA. May be needed both before and after RbfA during the maturation of 16S rRNA. It has affinity for free ribosomal 30S subunits but not for 70S ribosomes. The protein is Ribosome maturation factor RimM of Prochlorococcus marinus (strain MIT 9301).